The chain runs to 1435 residues: Putative ATP-dependent RNA helicase YLR419W (1435 aa).

Disordered stretches follow at residues 1–57 (MAKK…STAS) and 226–251 (LSSH…KNSH). The residue at position 9 (serine 9) is a Phosphoserine. A compositionally biased stretch (basic and acidic residues) spans 31–43 (KGQEPEPEDDKRA). Residues 45-57 (QQSNRAKVTSTAS) are compositionally biased toward polar residues. Residues 365 to 406 (PLSTRMIVERLTEIGVSSDEALLALQQNDMNENEAAGFLTRE) enclose the UBA domain. One can recognise an RWD domain in the interval 430 to 531 (QELESLESIY…EWLKENISKI (102 aa)). Positions 543 to 566 (DSKGAINKRNISNGKRSINNSSSR) are disordered. Polar residues predominate over residues 551–566 (RNISNGKRSINNSSSR). Positions 614–782 (IDIINKNEVV…FPGLATCHIE (169 aa)) constitute a Helicase ATP-binding domain. 627-634 (GETGSGKS) contacts ATP. Residues 729 to 732 (DEVH) carry the DEAH box motif. Serine 816 is modified (phosphoserine). Residues 845–1020 (LLCQVVEYVH…SLYLSVKAMG (176 aa)) form the Helicase C-terminal domain.

This sequence belongs to the DEAD box helicase family. DEAH subfamily.

The protein localises to the cytoplasm. The enzyme catalyses ATP + H2O = ADP + phosphate + H(+). Functionally, probable ATP-binding RNA helicase. In Saccharomyces cerevisiae (strain ATCC 204508 / S288c) (Baker's yeast), this protein is Putative ATP-dependent RNA helicase YLR419W.